Here is a 484-residue protein sequence, read N- to C-terminus: uncharacterized protein (484 aa).

A helical membrane pass occupies residues 25 to 45 (PLSLFVVLAAVPLPIYFSGLL). An EF-hand domain is found at 384-419 (LSFEETKELWVRADLDGNGVFDYEELKKIWNMTMVN). Residues Asp-397, Asp-399, Asn-401, and Glu-408 each coordinate Ca(2+).

It is found in the membrane. This is an uncharacterized protein from Arabidopsis thaliana (Mouse-ear cress).